A 505-amino-acid chain; its full sequence is Glucan endo-1,3-beta-glucosidase 4 (505 aa).

The signal sequence occupies residues 1–23; sequence MLLPRWFAEALLLLLSILACSNA. Residues Asn70 and Asn110 are each glycosylated (N-linked (GlcNAc...) asparagine). Glu119 (proton donor) is an active-site residue. Asn178 and Asn256 each carry an N-linked (GlcNAc...) asparagine glycan. Residue Glu266 is the Nucleophile of the active site. N-linked (GlcNAc...) asparagine glycosylation is found at Asn298, Asn338, and Asn357. Cys363 and Cys426 form a disulfide bridge. Asn453 is a glycosylation site (N-linked (GlcNAc...) asparagine). A lipid anchor (GPI-anchor amidated alanine) is attached at Ala474. Positions 475 to 505 are cleaved as a propeptide — removed in mature form; that stretch reads NARIIFSYHLPILAPLALTLLQLLLQHDRLL.

It belongs to the glycosyl hydrolase 17 family. Contains two additional disulfide bonds.

The protein localises to the cell membrane. It carries out the reaction Hydrolysis of (1-&gt;3)-beta-D-glucosidic linkages in (1-&gt;3)-beta-D-glucans.. This chain is Glucan endo-1,3-beta-glucosidase 4, found in Arabidopsis thaliana (Mouse-ear cress).